The primary structure comprises 620 residues: MSSGVQGGPAAHANAYQTHPLRDAASALGTLSPQAYVDVVSAAQRNFLERMSQLASEQCDAQPAAHDARLDDKPALRAPQERDAPPLGASDTGSRASGAAKLTELLGVLMSVISASSLDELKQRSDIWNQMSKAAQDNLSRLSDAFQRATDEAKAAADAAEQAAAAAKQAGADAKAADAAVDAAQKQYDDAVKQGLPDDRLQSLKAALEQARQQAGDAHGRADALQADATKKLDAASALATQARACEQQVDDAVNQATQQYGASASLRTPQSPRLSGAAELTAVLGKLQELISSGNVKELESKQKLFTEMQAKREAELQKKSDEYQAQVKKAEEMQKTMGCIGKIVGWVITAVSFAAAAFTGGASLALAAVGLALAVGDEISRATTGVSFMDKLMQPVMDAILKPLMEMISSLITKALVACGVDQQKAELAGAILGAVVTGVALVAAAFVGASAVKAVASKVIDAMAGQLTKLMDSAIGKMLVQLIEKFSEKSGLQALGSRTATAMTRMRRAIGVEAKEDGMLLANRFEKAGTVMNVGNQVSQAAGGIVVGVERAKAMGLLADVKEAMYDIKLLGDLLKQAVDAFAEHNRVLAQLMQQMSDAGEMQTSTGKLILRNARAV.

Positions 58–95 are disordered; the sequence is QCDAQPAAHDARLDDKPALRAPQERDAPPLGASDTGSR. Over residues 66-84 the composition is skewed to basic and acidic residues; sequence HDARLDDKPALRAPQERDA. Residues 309–339 adopt a coiled-coil conformation; it reads EMQAKREAELQKKSDEYQAQVKKAEEMQKTM. A run of 3 helical transmembrane segments spans residues 355-375, 401-421, and 430-450; these read FAAA…GLAL, AILK…LVAC, and LAGA…AAFV.

Belongs to the SctE/SipB/YopB family.

Its subcellular location is the secreted. It is found in the host membrane. Functionally, plays a role in the bacterium-induced formation of multinucleated giant cell (MNGC), which is formed after host cell fusion, as well as in the intercellular spreading of bacteria and in the induction of apoptosis in macrophages. May act in concert with other effector proteins to induce fusion of host cell membranes. In Burkholderia pseudomallei (strain 1710b), this protein is Translocator protein BipB (bipB).